A 472-amino-acid chain; its full sequence is Putative ankyrin repeat protein L675 (472 aa).

ANK repeat units follow at residues 125–156 (YKAN…DIHL), 187–216 (DNFK…NETI), 265–295 (YKTK…DKDI), 297–323 (HAML…NIHY), 325–351 (NDQA…GMDS), 352–381 (NNVF…DVNA), 382–411 (NNRS…DIKI), and 413–440 (DTVI…SCDD).

The chain is Putative ankyrin repeat protein L675 from Acanthamoeba polyphaga (Amoeba).